We begin with the raw amino-acid sequence, 308 residues long: MAHLLTLSELSLSEINRLLDEAETFRNGRPWHPATPMYVANLFFEPSTRTKCSFEMAERKLGLHVIPFDPERSSVQKGETLYDTVKTLEAIGVDAVVIRHHEDAYFEALRHSVGVSIINAGDGCGHHPTQSLLDLLTIRQEFGTFAGLTVVIIGDIRHSRVARSNAEVLTRLGANVLFSGPPEWEDDMNLHGTYVEIDEAIARADVVMLLRIQHERHAEKMGLTKEEYHQQYGLTLERAQLMKPGAIILHPAPVNRGVEIASQLVEAKPSRIFKQMENGVYVRMAVLKRAIEGRMQHGHVVEKWHVVQ.

Carbamoyl phosphate contacts are provided by arginine 49 and threonine 50. An L-aspartate-binding site is contributed by lysine 77. Arginine 99, histidine 127, and glutamine 130 together coordinate carbamoyl phosphate. The L-aspartate site is built by arginine 160 and arginine 211. Residues alanine 252 and proline 253 each coordinate carbamoyl phosphate.

It belongs to the aspartate/ornithine carbamoyltransferase superfamily. ATCase family. Heterododecamer (2C3:3R2) of six catalytic PyrB chains organized as two trimers (C3), and six regulatory PyrI chains organized as three dimers (R2).

The enzyme catalyses carbamoyl phosphate + L-aspartate = N-carbamoyl-L-aspartate + phosphate + H(+). It participates in pyrimidine metabolism; UMP biosynthesis via de novo pathway; (S)-dihydroorotate from bicarbonate: step 2/3. Catalyzes the condensation of carbamoyl phosphate and aspartate to form carbamoyl aspartate and inorganic phosphate, the committed step in the de novo pyrimidine nucleotide biosynthesis pathway. The chain is Aspartate carbamoyltransferase catalytic subunit from Geobacillus thermodenitrificans (strain NG80-2).